A 1342-amino-acid chain; its full sequence is DNA-directed RNA polymerase subunit beta (1342 aa).

This sequence belongs to the RNA polymerase beta chain family. As to quaternary structure, the RNAP catalytic core consists of 2 alpha, 1 beta, 1 beta' and 1 omega subunit. When a sigma factor is associated with the core the holoenzyme is formed, which can initiate transcription.

It carries out the reaction RNA(n) + a ribonucleoside 5'-triphosphate = RNA(n+1) + diphosphate. Functionally, DNA-dependent RNA polymerase catalyzes the transcription of DNA into RNA using the four ribonucleoside triphosphates as substrates. This Pasteurella multocida (strain Pm70) protein is DNA-directed RNA polymerase subunit beta.